Here is a 61-residue protein sequence, read N- to C-terminus: Small ribosomal subunit protein uS14B (61 aa).

4 residues coordinate Zn(2+): cysteine 24, cysteine 27, cysteine 40, and cysteine 43.

This sequence belongs to the universal ribosomal protein uS14 family. Zinc-binding uS14 subfamily. In terms of assembly, part of the 30S ribosomal subunit. Contacts proteins S3 and S10. The cofactor is Zn(2+).

Binds 16S rRNA, required for the assembly of 30S particles and may also be responsible for determining the conformation of the 16S rRNA at the A site. The sequence is that of Small ribosomal subunit protein uS14B from Levilactobacillus brevis (strain ATCC 367 / BCRC 12310 / CIP 105137 / JCM 1170 / LMG 11437 / NCIMB 947 / NCTC 947) (Lactobacillus brevis).